Reading from the N-terminus, the 1040-residue chain is Multidrug resistance protein MdtB (1040 aa).

Transmembrane regions (helical) follow at residues 16–36 (FIMRPVATTLLMVAILLAGII), 347–367 (LMMAIALVVMIIYLFLRNIPA), 369–389 (IIPGVAVPLSLIGTFAVMVFL), 396–416 (LTLMALTIATGFVVDDAIVVI), 440–460 (IGFTIISLTFSLIAVLIPLLF), 472–492 (FAITLAVAILISAVVSLTLTP), 537–557 (WLTLSVALSTLLLSVLLWVFI), 863–883 (LGSTVWLIVAAVVAMYIVLGI), 888–908 (FIHPITILSTLPTAGVGALLA), 911–931 (IAGSELDVIAIIGIILLIGIV), 968–988 (ILMTTLAALLGALPLMLSTGV), and 998–1018 (IGMVGGLIVSQVLTLFTTPVI).

It belongs to the resistance-nodulation-cell division (RND) (TC 2.A.6) family. MdtB subfamily. In terms of assembly, part of a tripartite efflux system composed of MdtA, MdtB and MdtC. MdtB forms a heteromultimer with MdtC.

The protein localises to the cell inner membrane. In terms of biological role, the MdtABC tripartite complex confers resistance against novobiocin and deoxycholate. In Escherichia coli (strain 55989 / EAEC), this protein is Multidrug resistance protein MdtB.